The sequence spans 981 residues: Probable NAD kinase 2, chloroplastic (981 aa).

Residues 319-364 (APSAEQVQRFAEIVSDSAKKPIYLHSQEGISRTSAMVSRWKQYVTR) form a calmodulin-binding region. 2 disordered regions span residues 369–413 (ATQN…DRTM) and 551–601 (TNGK…AERN). 3 stretches are compositionally biased toward polar residues: residues 387-406 (TEQL…NGTP), 551-563 (TNGK…ASTS), and 581-596 (SDTS…GSQK).

It belongs to the NAD kinase family.

It localises to the plastid. The protein resides in the chloroplast. It catalyses the reaction NAD(+) + ATP = ADP + NADP(+) + H(+). Functionally, involved in chlorophyll synthesis and chloroplast protection against oxidative damage. This Oryza sativa subsp. japonica (Rice) protein is Probable NAD kinase 2, chloroplastic.